A 1042-amino-acid chain; its full sequence is Protein phosphatase Slingshot homolog 1 (1042 aa).

A compositionally biased stretch (polar residues) spans 1–12; it reads MALVTLQRSPTP. Residues 1–29 are disordered; that stretch reads MALVTLQRSPTPSAASSSASNSELEAGSD. Position 2 is an N-acetylalanine (Ala-2). Over residues 13–22 the composition is skewed to low complexity; sequence SAASSSASNS. Phosphoserine occurs at positions 37 and 57. Positions 249–304 constitute a DEK-C domain; that stretch reads ERTERLIKAKLRSIMMSQDLENVTSKEIRNELEKQMNCNLKEFKEFIDNEMLLILG. The Tyrosine-protein phosphatase domain maps to 308–449; sequence KPSLIFDHLY…LSEYEGILDA (142 aa). Catalysis depends on Cys-393, which acts as the Phosphocysteine intermediate. Phosphoserine is present on Ser-516. Disordered regions lie at residues 576–609, 668–766, 858–900, and 915–942; these read FGNS…ASTQ, MERH…PHCD, IPEE…LDHT, and PTSS…KPGL. Over residues 675 to 693 the composition is skewed to polar residues; sequence SSSAICTQPTFLPHVTSSP. Residues 697-712 are compositionally biased toward low complexity; sequence ASSRSRAPERPASGPA. Residues 886–900 are compositionally biased toward polar residues; sequence LQKSPTSTLPRLDHT. A Phosphoserine modification is found at Ser-889. Residues 889–1042 are interaction with YWHAG; it reads SPTSTLPRLD…LKSPSRVNKS (154 aa). The span at 917-935 shows a compositional bias: low complexity; sequence SSSISSNLTRSSSSDSIHS. A Phosphoserine modification is found at Ser-970. Positions 985–995 are enriched in polar residues; the sequence is SSEADTSTIAD. A disordered region spans residues 985–1042; sequence SSEADTSTIADSQDAKCGLSSSFLPEPQSAPRDPAATSKSSGKSAPEHLKSPSRVNKS.

The protein belongs to the protein-tyrosine phosphatase family. In terms of assembly, interacts with the 14-3-3 proteins YWHAB, YWHAG, YWHAQ, and YWHAZ. Interaction with 14-3-3 proteins inhibits phosphatase activity and also blocks recruitment to lamellipodia and stimulation by actin. Interacts with actin and this stimulates phosphatase activity. Interacts with LIMK1. Phosphorylated. Inhibitory phosphorylation by PAK4 promotes binding to YWHAZ. Phosphorylation at Ser-970 is decreased by stimuli which promote actin reorganization and lamellipodia formation. Can be dephosphorylated and activated by PPP3CA/calcineurin A. Phosphorylation decreases immediately prior to telophase. In terms of tissue distribution, expressed in brain, heart, kidney and thymus. Also expressed at lower levels in liver, skeletal muscle, small intestine and spleen.

It localises to the cytoplasm. The protein localises to the cytoskeleton. It is found in the cleavage furrow. The protein resides in the midbody. It catalyses the reaction O-phospho-L-tyrosyl-[protein] + H2O = L-tyrosyl-[protein] + phosphate. It carries out the reaction O-phospho-L-seryl-[protein] + H2O = L-seryl-[protein] + phosphate. The catalysed reaction is O-phospho-L-threonyl-[protein] + H2O = L-threonyl-[protein] + phosphate. Functionally, protein phosphatase which regulates actin filament dynamics. Dephosphorylates and activates the actin binding/depolymerizing factor cofilin, which subsequently binds to actin filaments and stimulates their disassembly. Inhibitory phosphorylation of cofilin is mediated by LIMK1, which may also be dephosphorylated and inactivated by this protein. The polypeptide is Protein phosphatase Slingshot homolog 1 (Mus musculus (Mouse)).